The chain runs to 380 residues: Cytochrome b (380 aa).

4 helical membrane passes run Phe33–Met53, Trp77–Val98, Trp113–Leu133, and Phe178–Leu198. Positions 83 and 97 each coordinate heme b. Residues His182 and His196 each contribute to the heme b site. Residue His201 coordinates a ubiquinone. 4 consecutive transmembrane segments (helical) span residues Ile226–Phe246, Leu288–His308, Ile320–Gly340, and Phe347–Pro367.

The protein belongs to the cytochrome b family. In terms of assembly, the cytochrome bc1 complex contains 11 subunits: 3 respiratory subunits (MT-CYB, CYC1 and UQCRFS1), 2 core proteins (UQCRC1 and UQCRC2) and 6 low-molecular weight proteins (UQCRH/QCR6, UQCRB/QCR7, UQCRQ/QCR8, UQCR10/QCR9, UQCR11/QCR10 and a cleavage product of UQCRFS1). This cytochrome bc1 complex then forms a dimer. Heme b serves as cofactor.

It is found in the mitochondrion inner membrane. Its function is as follows. Component of the ubiquinol-cytochrome c reductase complex (complex III or cytochrome b-c1 complex) that is part of the mitochondrial respiratory chain. The b-c1 complex mediates electron transfer from ubiquinol to cytochrome c. Contributes to the generation of a proton gradient across the mitochondrial membrane that is then used for ATP synthesis. In Chionomys roberti (Robert's snow vole), this protein is Cytochrome b (MT-CYB).